Consider the following 117-residue polypeptide: Probable non-functional immunoglobulin heavy variable 3-16 (117 aa).

Positions 1–19 (MEFGLSWVFLAGILKGVQC) are cleaved as a signal peptide. The framework-1 stretch occupies residues 20–44 (EVQLVESGGGLVQPGGSLRLSCAAS). The region spanning 21 to 117 (VQLVESGGGL…EDMAVYYCVR (97 aa)) is the Ig-like domain. An intrachain disulfide couples C41 to C115. The complementarity-determining-1 stretch occupies residues 45–52 (GFTFSNSD). Residues 53 to 69 (MNWARKAPGKGLEWVSG) form a framework-2 region. The segment at 70–77 (VSWNGSRT) is complementarity-determining-2. N-linked (GlcNAc...) asparagine glycosylation occurs at N73. A framework-3 region spans residues 78–115 (HYVDSVKRRFIISRDNSRNSLYLQKNRRRAEDMAVYYC). The interval 116–117 (VR) is complementarity-determining-3.

Immunoglobulins are composed of two identical heavy chains and two identical light chains; disulfide-linked.

The protein resides in the secreted. It localises to the cell membrane. Its function is as follows. Probable non-functional open reading frame (ORF) of V region of the variable domain of immunoglobulin heavy chains. Non-functional ORF generally cannot participate in the synthesis of a productive immunoglobulin chain due to altered V-(D)-J or switch recombination and/or splicing site (at mRNA level) and/or conserved amino acid change (protein level). Immunoglobulins, also known as antibodies, are membrane-bound or secreted glycoproteins produced by B lymphocytes. In the recognition phase of humoral immunity, the membrane-bound immunoglobulins serve as receptors which, upon binding of a specific antigen, trigger the clonal expansion and differentiation of B lymphocytes into immunoglobulins-secreting plasma cells. Secreted immunoglobulins mediate the effector phase of humoral immunity, which results in the elimination of bound antigens. The antigen binding site is formed by the variable domain of one heavy chain, together with that of its associated light chain. Thus, each immunoglobulin has two antigen binding sites with remarkable affinity for a particular antigen. The variable domains are assembled by a process called V-(D)-J rearrangement and can then be subjected to somatic hypermutations which, after exposure to antigen and selection, allow affinity maturation for a particular antigen. The chain is Probable non-functional immunoglobulin heavy variable 3-16 from Homo sapiens (Human).